Here is a 648-residue protein sequence, read N- to C-terminus: Zinc finger protein grt1 (648 aa).

The segment at residues 13–42 (ACENCRKRKVKCSGGDVCFECQKYNENCVY) is a DNA-binding region (zn(2)-C6 fungal-type).

Monomer.

It is found in the nucleus. Functionally, may be involved in the facilitation of anaphase progression in mitosis. The sequence is that of Zinc finger protein grt1 (grt1) from Schizosaccharomyces pombe (strain 972 / ATCC 24843) (Fission yeast).